The following is a 391-amino-acid chain: Probable inactive allantoicase (391 aa).

The protein belongs to the allantoicase family.

Its function is as follows. The function of this enzyme is unclear as allantoicase activity is not known to exist in mammals. In Homo sapiens (Human), this protein is Probable inactive allantoicase.